The primary structure comprises 325 residues: Tagatose 1,6-diphosphate aldolase (325 aa).

This sequence belongs to the aldolase LacD family.

It catalyses the reaction D-tagatofuranose 1,6-bisphosphate = D-glyceraldehyde 3-phosphate + dihydroxyacetone phosphate. It functions in the pathway carbohydrate metabolism; D-tagatose 6-phosphate degradation; D-glyceraldehyde 3-phosphate and glycerone phosphate from D-tagatose 6-phosphate: step 2/2. The polypeptide is Tagatose 1,6-diphosphate aldolase (Staphylococcus epidermidis (strain ATCC 35984 / DSM 28319 / BCRC 17069 / CCUG 31568 / BM 3577 / RP62A)).